We begin with the raw amino-acid sequence, 132 residues long: Small ribosomal subunit protein uS19 (132 aa).

It belongs to the universal ribosomal protein uS19 family. Part of the 30S ribosomal subunit.

Protein S19 forms a complex with S13 that binds strongly to the 16S ribosomal RNA. This is Small ribosomal subunit protein uS19 from Pyrococcus furiosus (strain ATCC 43587 / DSM 3638 / JCM 8422 / Vc1).